The primary structure comprises 622 residues: Low affinity potassium transport system protein Kup (622 aa).

A run of 12 helical transmembrane segments spans residues 9–29 (LPAI…TSPL), 49–69 (VFGF…IKYL), 103–123 (VIMG…TPAI), 137–157 (PQLD…LFMI), 165–185 (VGKL…VLGL), 213–233 (VSFI…ALYA), 247–267 (WFTV…ALLL), 276–296 (PFFL…AALA), 337–357 (IYIP…IVSF), 363–383 (LAAA…ILST), 396–416 (FVAL…SANL), and 419–439 (LLSG…IMTT).

This sequence belongs to the HAK/KUP transporter (TC 2.A.72) family.

The protein localises to the cell inner membrane. It catalyses the reaction K(+)(in) + H(+)(in) = K(+)(out) + H(+)(out). Responsible for the low-affinity transport of potassium into the cell. Likely operates as a K(+):H(+) symporter. The sequence is that of Low affinity potassium transport system protein Kup from Salmonella typhi.